The chain runs to 217 residues: Thymidylate kinase (217 aa).

16 to 23 (GIDGAGKT) provides a ligand contact to ATP.

It belongs to the thymidylate kinase family.

The catalysed reaction is dTMP + ATP = dTDP + ADP. Phosphorylation of dTMP to form dTDP in both de novo and salvage pathways of dTTP synthesis. The chain is Thymidylate kinase from Xylella fastidiosa (strain M12).